The following is a 249-amino-acid chain: Aquaporin TIP2-1 (249 aa).

2 helical membrane-spanning segments follow: residues 20-40 (AYVA…GSAI) and 54-74 (AGLV…VSVA). The NPA 1 motif lies at 83 to 85 (NPA). A run of 3 helical transmembrane segments spans residues 102–122 (VFYW…LGFV), 141–161 (GVVF…ATAA), and 168–188 (LGTI…LAAG). Residues 196–198 (NPA) carry the NPA 2 motif. A helical membrane pass occupies residues 217-237 (WVGPLVGGGLAGLVYGDVFIG).

This sequence belongs to the MIP/aquaporin (TC 1.A.8) family. TIP (TC 1.A.8.10) subfamily.

The protein resides in the vacuole membrane. Functionally, aquaporins facilitate the transport of water and small neutral solutes across cell membranes. This chain is Aquaporin TIP2-1 (TIP2-1), found in Zea mays (Maize).